Here is a 491-residue protein sequence, read N- to C-terminus: Protein DETOXIFICATION 20 (491 aa).

The next 12 membrane-spanning stretches (helical) occupy residues 37 to 57 (LWVV…VSMV), 75 to 95 (ITFT…AGAL), 120 to 140 (IVLT…GPIL), 156 to 176 (LALW…CQMF), 185 to 205 (IISY…WLLV), 214 to 234 (GAMT…LLYV), 265 to 285 (GGML…TGNL), 296 to 316 (AICI…LAAV), 337 to 357 (LIAV…FLFL), 381 to 401 (LLAF…VAIG), 413 to 433 (LACY…VVGL), and 438 to 458 (VWIG…VMTL).

This sequence belongs to the multi antimicrobial extrusion (MATE) (TC 2.A.66.1) family.

The protein resides in the membrane. This is Protein DETOXIFICATION 20 from Arabidopsis thaliana (Mouse-ear cress).